A 1319-amino-acid polypeptide reads, in one-letter code: MNRRYVLSLSGALLASSCMTVLVAVPVARAQQASTAMTTAATSATAAPRQILLQQARFWLQQQQYDNARQALQNAERIAPNSPDVLEVLGEYQTAIGNREAAADTLRHLQQVAPGSAAAGNLNDLLSERAISQSDLSQIRSLAGSGQNAQAVAGYQKLFHGGKPPHSLAVEYYQTMAGVPAQWDQARAGLAGVVASNPQDYRAQLAFAQALTYNTSTRMEGLTRLKDLQSFRSQAPVEAAAAAQSYRQTLSWLPVNPETQPLMEQWLSAHPNDTALREHMLHPPGGPPDKAGLARQAGYQQLNAGRLAAAEQSFQSALQINSHDADSLGGMGLVSMRQGDTAEARRYFEEAMAADPKTADRWRPALAGMAVSGEYASVRQLIAAHQYTEAKQQLATLARQPGQYTGATLMLADLQRSTGQIAAAEQEYRGILSREPNNQLALMGLARVDMAQGNTAEARQLLSRVGPQYASQVGEIEVSGLMAAASQTSDSARKVSILREAMAQAPRDPWVRINLANALQQQGDVAEAGRVMQPILANPVTAQDRQAGILYTYGSGNDAMTRQLLAGLSPADYSPAIRSIAEEMEIKQDLASRLSMVSNPVPLIREALTQPDPTGARGVAVADLFRQRGDMVHARMALRIASTRTIDLSPDQRLSYATEYMKISNPVAAARLLAPLGDGTGSATGSALLPEQVQTLQQLRMGISVAQSDLLNQRGDQAQAYDHLAPALQADPEATSPKLALARLYNGHGKPGKALEIDLAVLRHNPQDLDARQAAVQAAVNSDHNSLATRLAMDGVQESPMDARAWLAMAVADQADGHGQRTIEDLRRAYDLRLQQVEGTRAASGAGAAQEDALAPPSTNPFRPRGYGHQTELGAPVTGGSYSAEAASPDTSDQMLSSIAGQIRTLRENLAPSIDGGLGFRSRSGEHGMGRLTEANIPIVGRLPLQAGASALTFSITPTMIWSGNLNTGSVYDVPRYGTMMGVQAYNQYDSYTNAGRDQQRIAAGTAEAGFAPDVQFGNSWVRADVGASPIGFPITNVLGGVEFSPRVGPVTFRVSAERRSITNSVLSYGGLRDTNYNSALGRYARQVYGQALSKQWGSEWGGVVTNHFHGQVEATLGNTILYGGGGYAIQTGKNVQRNSEREAGIGANTLVWHNANMLVRIGVSLTYFGYAKNEDFYTYGQGGYFSPQSYYAATVPVRYAGQHKRLDWDVTGSVGYQVFHEHSAPFFPTSSLLQSGANTIASNYSASATPAEYLSEETVNSAYYPGDSIAGLTGGFNARVGYRFTRNVRLDLSGRYQKAGNWTESGAMISAHYLIMDQ.

The signal sequence occupies residues 1 to 46; it reads MNRRYVLSLSGALLASSCMTVLVAVPVARAQQASTAMTTAATSATA. TPR repeat units lie at residues 49 to 82, 84 to 116, 291 to 324, 325 to 358, 405 to 438, 557 to 590, 701 to 734, and 736 to 768; these read RQIL…APNS, DVLE…APGS, AGLA…NSHD, ADSL…DPKT, TGAT…EPNN, NDAM…KQDL, MGIS…DPEA, and SPKL…NPQD. Low complexity predominate over residues 841-855; sequence RAASGAGAAQEDALA. Positions 841 to 890 are disordered; it reads RAASGAGAAQEDALAPPSTNPFRPRGYGHQTELGAPVTGGSYSAEAASPD. One copy of the TPR 9 repeat lies at 1059 to 1094; that stretch reads RRSITNSVLSYGGLRDTNYNSALGRYARQVYGQALS.

It belongs to the AcsC/BcsC family.

It localises to the cell outer membrane. The protein operates within glycan metabolism; bacterial cellulose biosynthesis. Its function is as follows. Required for maximal bacterial cellulose synthesis. It may be involved in the formation of a membrane complex for extrusion of the cellulose product. In Komagataeibacter xylinus (Gluconacetobacter xylinus), this protein is Cellulose synthase operon protein C (bcsC).